The following is a 365-amino-acid chain: Chorismate synthase (365 aa).

Residues Arg-48 and Arg-54 each coordinate NADP(+). FMN contacts are provided by residues 131–133, 243–244, Gly-288, 303–307, and Arg-329; these read RSS, NA, and KPTSS.

This sequence belongs to the chorismate synthase family. As to quaternary structure, homotetramer. FMNH2 serves as cofactor.

The enzyme catalyses 5-O-(1-carboxyvinyl)-3-phosphoshikimate = chorismate + phosphate. It participates in metabolic intermediate biosynthesis; chorismate biosynthesis; chorismate from D-erythrose 4-phosphate and phosphoenolpyruvate: step 7/7. Functionally, catalyzes the anti-1,4-elimination of the C-3 phosphate and the C-6 proR hydrogen from 5-enolpyruvylshikimate-3-phosphate (EPSP) to yield chorismate, which is the branch point compound that serves as the starting substrate for the three terminal pathways of aromatic amino acid biosynthesis. This reaction introduces a second double bond into the aromatic ring system. This Sinorhizobium fredii (strain NBRC 101917 / NGR234) protein is Chorismate synthase.